Consider the following 466-residue polypeptide: Alpha-1A adrenergic receptor (466 aa).

The Extracellular portion of the chain corresponds to 1–25; that stretch reads MVFLSGNASDSSNCTHPPAPVNISK. 3 N-linked (GlcNAc...) asparagine glycosylation sites follow: asparagine 7, asparagine 13, and asparagine 22. Residues 26-51 form a helical membrane-spanning segment; sequence AILLGVILGGLILFGVLGNILVILSV. Residues 52-63 lie on the Cytoplasmic side of the membrane; the sequence is ACHRHLHSVTHY. The helical transmembrane segment at 64–89 threads the bilayer; that stretch reads YIVNLAVADLLLTSTVLPFSAIFEIL. At 90–99 the chain is on the extracellular side; it reads GYWAFGRVFC. The helical transmembrane segment at 100–122 threads the bilayer; sequence NIWAAVDVLCCTASIISLCVISI. Over 123-143 the chain is Cytoplasmic; it reads DRYIGVSYPLRYPTIVTQRRG. A helical membrane pass occupies residues 144-168; sequence LRALLCVWAFSLVISVGPLFGWRQP. The Extracellular portion of the chain corresponds to 169-181; sequence APDDETICQINEE. A helical transmembrane segment spans residues 182 to 205; sequence PGYVLFSALGSFYVPLTIILAMYC. Residues 206-272 are Cytoplasmic-facing; sequence RVYVVAKRES…KFSREKKAAK (67 aa). The chain crosses the membrane as a helical span at residues 273–297; that stretch reads TLGIVVGCFVLCWLPFFLVMPIGSF. Residues 298–304 are Extracellular-facing; sequence FPDFKPP. A helical transmembrane segment spans residues 305–329; the sequence is ETVFKIVFWLGYLNSCINPIIYPCS. The Cytoplasmic portion of the chain corresponds to 330–466; the sequence is SQEFKKAFQN…ISLSENGEEV (137 aa). A Nuclear localization signal motif is present at residues 334-349; sequence KKAFQNVLKIQCLRRK. Cysteine 345 is lipidated: S-palmitoyl cysteine.

Belongs to the G-protein coupled receptor 1 family. Adrenergic receptor subfamily. ADRA1A sub-subfamily. As to quaternary structure, homo- and heterooligomer. Heterooligomerizes with ADRA1B homooligomers in cardiac myocytes. Interacts with CAVIN4. As to expression, abundant in liver, vas deferens, brain, and aorta, but not in heart.

It is found in the nucleus membrane. The protein localises to the cell membrane. It localises to the cytoplasm. The protein resides in the membrane. Its subcellular location is the caveola. In terms of biological role, this alpha-adrenergic receptor mediates its action by association with G proteins that activate a phosphatidylinositol-calcium second messenger system. Its effect is mediated by G(q) and G(11) proteins. Nuclear ADRA1A-ADRA1B heterooligomers regulate phenylephrine (PE)-stimulated ERK signaling in cardiac myocytes. In Oryctolagus cuniculus (Rabbit), this protein is Alpha-1A adrenergic receptor (ADRA1A).